The sequence spans 226 residues: ATP-dependent dethiobiotin synthetase BioD (226 aa).

Residue 12-17 (GVGKTV) participates in ATP binding. Mg(2+) is bound at residue Thr-16. Lys-37 is a catalytic residue. Thr-41 is a binding site for substrate. ATP contacts are provided by residues Asp-49, 108-111 (EGAG), 169-170 (GS), and 197-199 (PAG). Mg(2+) is bound by residues Asp-49 and Glu-108.

It belongs to the dethiobiotin synthetase family. As to quaternary structure, homodimer. Mg(2+) serves as cofactor.

Its subcellular location is the cytoplasm. The catalysed reaction is (7R,8S)-7,8-diammoniononanoate + CO2 + ATP = (4R,5S)-dethiobiotin + ADP + phosphate + 3 H(+). Its pathway is cofactor biosynthesis; biotin biosynthesis; biotin from 7,8-diaminononanoate: step 1/2. Catalyzes a mechanistically unusual reaction, the ATP-dependent insertion of CO2 between the N7 and N8 nitrogen atoms of 7,8-diaminopelargonic acid (DAPA, also called 7,8-diammoniononanoate) to form a ureido ring. This is ATP-dependent dethiobiotin synthetase BioD from Mycobacterium bovis (strain ATCC BAA-935 / AF2122/97).